Here is a 166-residue protein sequence, read N- to C-terminus: Disulfide bond reductase DsbH (166 aa).

The first 22 residues, 1 to 22, serve as a signal peptide directing secretion; sequence MKFWLQGCAFVGCLLLTLPCCA. Positions 32–166 constitute a Thioredoxin domain; that stretch reads LQQTRPIAAA…SKVKSALKLR (135 aa). C72 and C75 are oxidised to a cystine. 73–74 is a substrate binding site; the sequence is MW.

In terms of assembly, monomer.

The protein resides in the periplasm. Its function is as follows. Catalyzes the reduction of disulfide bonds. May function in reducing intermolecular disulfides between proteins and small molecules in the periplasm, or keeping a specific subset of periplasmic proteins reduced, or maintaining the periplasm of Chlamydia in a generally reducing state. Seems to be unable to oxidize thiols into disulfides and does not display disulfide bond isomerase activity. The polypeptide is Disulfide bond reductase DsbH (dsbH) (Chlamydia pneumoniae (Chlamydophila pneumoniae)).